The sequence spans 914 residues: Isoleucine--tRNA ligase (914 aa).

A 'HIGH' region motif is present at residues P64–H74. E557 provides a ligand contact to L-isoleucyl-5'-AMP. The 'KMSKS' region motif lies at P598 to S602. K601 contacts ATP. 4 residues coordinate Zn(2+): C889, C892, C906, and C909.

It belongs to the class-I aminoacyl-tRNA synthetase family. IleS type 1 subfamily. Monomer. Zn(2+) serves as cofactor.

It is found in the cytoplasm. It catalyses the reaction tRNA(Ile) + L-isoleucine + ATP = L-isoleucyl-tRNA(Ile) + AMP + diphosphate. Functionally, catalyzes the attachment of isoleucine to tRNA(Ile). As IleRS can inadvertently accommodate and process structurally similar amino acids such as valine, to avoid such errors it has two additional distinct tRNA(Ile)-dependent editing activities. One activity is designated as 'pretransfer' editing and involves the hydrolysis of activated Val-AMP. The other activity is designated 'posttransfer' editing and involves deacylation of mischarged Val-tRNA(Ile). This Leptospira interrogans serogroup Icterohaemorrhagiae serovar copenhageni (strain Fiocruz L1-130) protein is Isoleucine--tRNA ligase.